The following is a 421-amino-acid chain: uncharacterized protein (421 aa).

This is an uncharacterized protein from Bacillus subtilis (strain 168).